The sequence spans 334 residues: DNA-directed RNA polymerase subunit alpha (334 aa).

The segment at methionine 1–aspartate 234 is alpha N-terminal domain (alpha-NTD). The tract at residues isoleucine 248–glycine 334 is alpha C-terminal domain (alpha-CTD).

Belongs to the RNA polymerase alpha chain family. As to quaternary structure, homodimer. The RNAP catalytic core consists of 2 alpha, 1 beta, 1 beta' and 1 omega subunit. When a sigma factor is associated with the core the holoenzyme is formed, which can initiate transcription.

The enzyme catalyses RNA(n) + a ribonucleoside 5'-triphosphate = RNA(n+1) + diphosphate. In terms of biological role, DNA-dependent RNA polymerase catalyzes the transcription of DNA into RNA using the four ribonucleoside triphosphates as substrates. This is DNA-directed RNA polymerase subunit alpha from Hahella chejuensis (strain KCTC 2396).